The chain runs to 395 residues: Phosphoglycerate kinase (395 aa).

Substrate is bound by residues 21-23, Arg36, 59-62, Arg114, and Arg147; these read DIN and HFGR. Residues Lys197, Glu322, and 352 to 355 contribute to the ATP site; that span reads GGDT.

It belongs to the phosphoglycerate kinase family. In terms of assembly, monomer.

It is found in the cytoplasm. It carries out the reaction (2R)-3-phosphoglycerate + ATP = (2R)-3-phospho-glyceroyl phosphate + ADP. It functions in the pathway carbohydrate degradation; glycolysis; pyruvate from D-glyceraldehyde 3-phosphate: step 2/5. This chain is Phosphoglycerate kinase, found in Roseobacter denitrificans (strain ATCC 33942 / OCh 114) (Erythrobacter sp. (strain OCh 114)).